Consider the following 75-residue polypeptide: UPF0352 protein plu2871 (75 aa).

This sequence belongs to the UPF0352 family.

The sequence is that of UPF0352 protein plu2871 from Photorhabdus laumondii subsp. laumondii (strain DSM 15139 / CIP 105565 / TT01) (Photorhabdus luminescens subsp. laumondii).